We begin with the raw amino-acid sequence, 230 residues long: Fibronectin type III domain-containing protein 4 (230 aa).

The first 40 residues, 1–40, serve as a signal peptide directing secretion; it reads MPGCLPADSVGTMASLMPLSPYLSPTVLLLVSCDLGFVRA. Over 41-163 the chain is Extracellular; that stretch reads DRPPSPVNVT…GLDGERPLQT (123 aa). One can recognise a Fibronectin type-III domain in the interval 43–136; sequence PPSPVNVTVT…PRVHFRTLKG (94 aa). Residues Asn-48 and Asn-143 are each glycosylated (N-linked (GlcNAc...) asparagine). Positions 118–156 are disordered; sequence GLRGESPPGPRVHFRTLKGSDRLPSNSSSPGDITVEGLD. A helical membrane pass occupies residues 164–184; the sequence is GEVVIIVVVLLMWAAVIGLFC. Over 185-230 the chain is Cytoplasmic; the sequence is RQYDIIKDNDSNNNPKEKGKGPEQSPQGRPVGTRQKKSPSINTIDV. Residues 193–205 show a composition bias toward basic and acidic residues; the sequence is NDSNNNPKEKGKG. Residues 193 to 230 form a disordered region; it reads NDSNNNPKEKGKGPEQSPQGRPVGTRQKKSPSINTIDV.

The protein localises to the membrane. Its subcellular location is the secreted. Functionally, has anti-inflammatory properties. In the colon, acts on macrophages to down-regulate inflammation. May suppress osteoclastogenesis and mature osteoclast resorptive function. In white adipose tissue, decreases local inflammation, via interaction with GPR116. Also required for proper systemic glucose tolerance, specifically sensitizing white adipocytes to insulin and promoting glucose uptake. The insulin sensitizing function in adipose tissue is mediated by interaction with ADGRF5/GPR116 and activation of cAMP signaling. This chain is Fibronectin type III domain-containing protein 4 (FNDC4), found in Bos taurus (Bovine).